We begin with the raw amino-acid sequence, 501 residues long: Histone deacetylase 19 (501 aa).

Residues 17–329 (RKVCYFYDPE…WCYETGVALG (313 aa)) are histone deacetylase. Residue His149 is the Proton donor/acceptor of the active site. Zn(2+)-binding residues include Asp184, His186, and Asp272. Residues 383 to 501 (HAPSVPFQER…GAEQAFPPKT (119 aa)) are disordered. Positions 397-407 (ETPEVDEDQED) are enriched in acidic residues. Position 416 is a phosphoserine (Ser416). 2 stretches are compositionally biased toward basic and acidic residues: residues 422 to 457 (DDRKPIPSRVKREAVEPDTKDKDGLKGIMERGKGCE) and 479 to 488 (ASVKMEEEGT).

It belongs to the histone deacetylase family. HD type 1 subfamily. As to quaternary structure, interacts with SIN3, SAP18 and TPR1. Interacts with CDKE-1, MED14 and LUG. Interacts with TPL. Interacts with AHL22. The cofactor is Zn(2+). As to expression, highly expressed in leaves, stems, flowers and young siliques.

The protein resides in the nucleus. It catalyses the reaction N(6)-acetyl-L-lysyl-[histone] + H2O = L-lysyl-[histone] + acetate. Functionally, responsible for the deacetylation of lysine residues on the N-terminal part of the core histones (H2A, H2B, H3 and H4). Histone deacetylation gives a tag for epigenetic repression and plays an important role in transcriptional regulation, cell cycle progression and developmental events. Histone deacetylases act via the formation of large multiprotein complexes. HDA19 is involved in jasmonic acid and ethylene signaling of pathogen response. Part of a repressor complex including APETALA2 (AP2) and TOPLESS (TPL) that control the expression domains of numerous floral organ identity genes. Involved in negative regulation of salinity stress response. Represses the expression of stress tolerance-related genes, genes coding for late embryogenesis abundant (LEA) proteins that prevent protein aggregation, and positive regulators of abscisic acid (ABA) signaling, such as ABI5 and NAC019. The protein is Histone deacetylase 19 of Arabidopsis thaliana (Mouse-ear cress).